Here is a 396-residue protein sequence, read N- to C-terminus: Elongation factor Tu 2 (396 aa).

One can recognise a tr-type G domain in the interval 10–206; it reads KPHVNVGTIG…AIDSYIPEPE (197 aa). Residues 19–26 form a G1 region; sequence GHIDHGKT. 19–26 contacts GTP; the sequence is GHIDHGKT. A Mg(2+)-binding site is contributed by Thr26. The tract at residues 60 to 64 is G2; it reads GITIA. Residues 81 to 84 form a G3 region; it reads DCPG. GTP-binding positions include 81-85 and 136-139; these read DCPGH and NKCD. The tract at residues 136–139 is G4; the sequence is NKCD. A G5 region spans residues 174 to 176; that stretch reads SAL.

It belongs to the TRAFAC class translation factor GTPase superfamily. Classic translation factor GTPase family. EF-Tu/EF-1A subfamily. Monomer.

The protein localises to the cytoplasm. The enzyme catalyses GTP + H2O = GDP + phosphate + H(+). GTP hydrolase that promotes the GTP-dependent binding of aminoacyl-tRNA to the A-site of ribosomes during protein biosynthesis. In Desulfotalea psychrophila (strain LSv54 / DSM 12343), this protein is Elongation factor Tu 2.